Consider the following 290-residue polypeptide: Poly-beta-1,6-N-acetyl-D-glucosamine N-deacetylase (290 aa).

The N-terminal stretch at 1 to 28 (MKYRKLIILVLSILIILPVSTLDGHHIA) is a signal peptide. Residues 114-290 (RSVWINFDDM…KRWDGFHEKD (177 aa)) form the NodB homology domain.

This sequence belongs to the polysaccharide deacetylase family.

Its subcellular location is the secreted. The protein resides in the cell wall. In terms of biological role, catalyzes the N-deacetylation of poly-beta-1,6-N-acetyl-D-glucosamine (PNAG, also referred to as PIA), a biofilm adhesin polysaccharide. N-deacetylation is crucial for attachment of the polysaccharide to the bacterial cell surface; it leads to the introduction of positive charges in the otherwise neutral PIA polymer, allowing electrostatic interactions. In Staphylococcus aureus (strain MRSA252), this protein is Poly-beta-1,6-N-acetyl-D-glucosamine N-deacetylase (icaB).